A 61-amino-acid polypeptide reads, in one-letter code: Prophage outer membrane lipoprotein RzoR (61 aa).

Residues 1 to 19 (MRKLKMMLCVMMLPLVVVG) form the signal peptide. The N-palmitoyl cysteine moiety is linked to residue Cys20. Cys20 is lipidated: S-diacylglycerol cysteine.

The protein belongs to the lambdalikevirus o-spanin family. In terms of assembly, homodimer; disulfide-linked. Interacts (via C-terminus) with RZ (via C-terminus). Part of the spanin complex which spans the entire periplasmic space. The spanin complex is composed of spanin, inner membrane subunit and spanin, outer membrane subunit.

The protein resides in the cell outer membrane. In terms of biological role, component of the spanin complex that disrupts the outer membrane and causes cell lysis during virus exit. The spanin complex conducts the final step in cell lysis by disrupting the outer membrane after holin and endolysin action have permeabilized the inner membrane and degraded the host peptidoglycans. This Escherichia coli (strain K12) protein is Prophage outer membrane lipoprotein RzoR (rzoR).